The sequence spans 224 residues: DeSI-like protein At4g17486 (224 aa).

Positions 26 to 163 (TPVYLNVYDL…FCNCLLPESI (138 aa)) constitute a PPPDE domain. Catalysis depends on residues H51 and C125. Positions 176-201 (EFSDEDESNSEASSVSDEEGSEQHLI) are disordered.

This sequence belongs to the DeSI family.

This chain is DeSI-like protein At4g17486, found in Arabidopsis thaliana (Mouse-ear cress).